The chain runs to 415 residues: Erythronolide mycarosyltransferase (415 aa).

It belongs to the glycosyltransferase 28 family.

The catalysed reaction is dTDP-beta-L-mycarose + erythronolide B = 3-O-alpha-L-mycarosylerythronolide B + dTDP + H(+). In terms of biological role, involved in the biosynthesis of the macrolide antibiotic erythromycin. Catalyzes the reversible transfer of mycarosyl from dTDP-beta-L-mycarose to erythronolide B to yield 3-alpha-L-mycarosylerythronolide B. It can also use TDP-beta-L-cladinose. The chain is Erythronolide mycarosyltransferase from Saccharopolyspora erythraea (Streptomyces erythraeus).